Here is a 151-residue protein sequence, read N- to C-terminus: Ribosome maturation factor RimP (151 aa).

The protein belongs to the RimP family.

It is found in the cytoplasm. Functionally, required for maturation of 30S ribosomal subunits. The sequence is that of Ribosome maturation factor RimP from Mannheimia succiniciproducens (strain KCTC 0769BP / MBEL55E).